Reading from the N-terminus, the 442-residue chain is Trigger factor (442 aa).

In terms of domain architecture, PPIase FKBP-type spans 163-248 (YDRVTINYCI…IIKIEKKQEL (86 aa)).

This sequence belongs to the FKBP-type PPIase family. Tig subfamily.

It localises to the cytoplasm. It carries out the reaction [protein]-peptidylproline (omega=180) = [protein]-peptidylproline (omega=0). Functionally, involved in protein export. Acts as a chaperone by maintaining the newly synthesized protein in an open conformation. Functions as a peptidyl-prolyl cis-trans isomerase. The chain is Trigger factor from Buchnera aphidicola subsp. Acyrthosiphon pisum (strain Tuc7).